A 610-amino-acid polypeptide reads, in one-letter code: Alpha-fetoprotein (610 aa).

The signal sequence occupies residues 1-18 (MKWVVSIFLIVLLNFTES). Albumin domains are found at residues 19 to 210 (RTMH…ASIT), 211 to 403 (KELR…EELE), and 404 to 602 (KYIQ…ALIS). His-22 contacts Cu(2+). Disulfide bonds link Cys-99–Cys-114, Cys-113–Cys-124, Cys-148–Cys-193, Cys-192–Cys-201, Cys-224–Cys-270, Cys-269–Cys-277, Cys-289–Cys-303, and Cys-302–Cys-314. 3 positions are modified to phosphoserine: Ser-111, Ser-115, and Ser-117. N-linked (GlcNAc...) asparagine glycosylation is present at Asn-251. Ser-345 bears the Phosphoserine mark. 7 cysteine pairs are disulfide-bonded: Cys-385–Cys-394, Cys-417–Cys-463, Cys-462–Cys-473, Cys-486–Cys-502, Cys-501–Cys-512, Cys-539–Cys-584, and Cys-583–Cys-592.

This sequence belongs to the ALB/AFP/VDB family. As to quaternary structure, dimeric and trimeric forms have been found in addition to the monomeric form. In terms of tissue distribution, plasma. Synthesized by the fetal liver and yolk sac.

The protein localises to the secreted. In terms of biological role, binds copper, nickel, and fatty acids as well as, and bilirubin less well than, serum albumin. The polypeptide is Alpha-fetoprotein (AFP) (Sus scrofa (Pig)).